The following is a 268-amino-acid chain: Tryptophan synthase alpha chain (268 aa).

Catalysis depends on proton acceptor residues Glu-49 and Asp-60.

Belongs to the TrpA family. In terms of assembly, tetramer of two alpha and two beta chains.

The catalysed reaction is (1S,2R)-1-C-(indol-3-yl)glycerol 3-phosphate + L-serine = D-glyceraldehyde 3-phosphate + L-tryptophan + H2O. It functions in the pathway amino-acid biosynthesis; L-tryptophan biosynthesis; L-tryptophan from chorismate: step 5/5. The alpha subunit is responsible for the aldol cleavage of indoleglycerol phosphate to indole and glyceraldehyde 3-phosphate. This chain is Tryptophan synthase alpha chain, found in Escherichia coli (strain ATCC 8739 / DSM 1576 / NBRC 3972 / NCIMB 8545 / WDCM 00012 / Crooks).